Reading from the N-terminus, the 497-residue chain is Glycerol kinase (497 aa).

Thr11 is an ADP binding site. Residues Thr11, Ser12, and Ser13 each contribute to the ATP site. Residue Thr11 participates in sn-glycerol 3-phosphate binding. ADP is bound at residue Arg15. Positions 81, 82, 133, and 242 each coordinate sn-glycerol 3-phosphate. Residues Arg81, Glu82, Tyr133, Asp242, and Gln243 each coordinate glycerol. Residues Thr264 and Gly307 each coordinate ADP. Thr264, Gly307, Gln311, and Gly412 together coordinate ATP. ADP-binding residues include Gly412 and Asn416.

Belongs to the FGGY kinase family.

The catalysed reaction is glycerol + ATP = sn-glycerol 3-phosphate + ADP + H(+). Its pathway is polyol metabolism; glycerol degradation via glycerol kinase pathway; sn-glycerol 3-phosphate from glycerol: step 1/1. Its activity is regulated as follows. Inhibited by fructose 1,6-bisphosphate (FBP). Functionally, key enzyme in the regulation of glycerol uptake and metabolism. Catalyzes the phosphorylation of glycerol to yield sn-glycerol 3-phosphate. This is Glycerol kinase from Polaromonas sp. (strain JS666 / ATCC BAA-500).